The primary structure comprises 264 residues: Eukaryotic translation initiation factor 6 (264 aa).

It belongs to the eIF-6 family. Monomer. Associates with the 60S ribosomal subunit.

It is found in the cytoplasm. The protein localises to the nucleus. Its subcellular location is the nucleolus. In terms of biological role, binds to the 60S ribosomal subunit and prevents its association with the 40S ribosomal subunit to form the 80S initiation complex in the cytoplasm. May also be involved in ribosome biogenesis. The sequence is that of Eukaryotic translation initiation factor 6 from Toxoplasma gondii (strain ATCC 50861 / VEG).